A 111-amino-acid polypeptide reads, in one-letter code: Irditoxin subunit B (111 aa).

An N-terminal signal peptide occupies residues 1-19; the sequence is MKTLLLAVAVVAFVCLGSA. Residues 20-34 constitute a propeptide that is removed on maturation; it reads DQLGLGRQQIDWGKG. Position 35 is a pyrrolidone carboxylic acid (Gln-35). Disulfide bonds link Cys-44/Cys-68, Cys-47/Cys-55, Cys-61/Cys-87, Cys-91/Cys-102, and Cys-103/Cys-108.

It belongs to the three-finger toxin family. Ancestral subfamily. Boigatoxin sub-subfamily. In terms of assembly, heterodimer of A and B chains; disulfide-linked. In terms of tissue distribution, expressed by the venom gland.

Its subcellular location is the secreted. Its function is as follows. This bird and reptile-specific postsynaptic neurotoxin inhibits the chick muscle alpha-1-beta-1-gamma-delta (CHRNA1-CHRNB1-CHRNG-CHRND) nicotinic acetylcholine receptor (nAChR) 100-fold more compared with the mouse receptor. In vivo, produces rapid flaccid paralysis, dyspnea and increased respiratory rate in geckos. At sublethal doses geckos were immobilized for up to three days and then recovered. Chicks injected with lethal doses showed rapid onset of inactivity, dyspnea and neck droop, and no extended paralysis with survival was seen. This Boiga irregularis (Brown tree snake) protein is Irditoxin subunit B.